The following is a 443-amino-acid chain: Anthocyanidin 3-O-glucoside 5-O-glucosyltransferase 2 (443 aa).

A signal peptide spans 1 to 22; it reads MVRRRVLLATFPAQGHINPALQ. Residue His16 is the Proton acceptor of the active site. His16 serves as a coordination point for an anthocyanidin. UDP-alpha-D-glucose is bound by residues Gln340, His355, Trp358, Asn359, Ser360, Glu363, Asp379, and Gln380.

Belongs to the UDP-glycosyltransferase family.

The enzyme catalyses an anthocyanidin 3-O-beta-D-glucoside + UDP-alpha-D-glucose = an anthocyanidin 3,5-di-O-beta-D-glucoside + UDP + 2 H(+). Its pathway is pigment biosynthesis; anthocyanin biosynthesis. Its function is as follows. Catalyzes the glucosylation at the O-5 position of anthocyanidin 3-glucosides to form anthocyanidin 3,5-di-O-glucosides using UDP-glucose as sugar donor. Anthocyanidin 3,5-di-O-glucosides are molecules that are responsible for pigmentation. Also acts on anthocyanidin 3-O-(6-O-malonylglucoside). Much less active with hydroxycinnamoylglucose derivatives. No activity in the absence of the 3-O-glucoside group. The chain is Anthocyanidin 3-O-glucoside 5-O-glucosyltransferase 2 (PF3R6) from Perilla frutescens (Beefsteak mint).